A 545-amino-acid chain; its full sequence is Glucose-6-phosphate isomerase (545 aa).

The active-site Proton donor is the Glu-351. Residues His-382 and Lys-510 contribute to the active site.

The protein belongs to the GPI family.

It is found in the cytoplasm. It carries out the reaction alpha-D-glucose 6-phosphate = beta-D-fructose 6-phosphate. The protein operates within carbohydrate biosynthesis; gluconeogenesis. Its pathway is carbohydrate degradation; glycolysis; D-glyceraldehyde 3-phosphate and glycerone phosphate from D-glucose: step 2/4. In terms of biological role, catalyzes the reversible isomerization of glucose-6-phosphate to fructose-6-phosphate. In Shewanella loihica (strain ATCC BAA-1088 / PV-4), this protein is Glucose-6-phosphate isomerase.